Here is a 638-residue protein sequence, read N- to C-terminus: Chaperone protein DnaK (638 aa).

At Thr-200 the chain carries Phosphothreonine; by autocatalysis. The interval 599-623 (LHMAATAEQQSASTGAGAGSSAKVD) is disordered. Over residues 609–620 (SASTGAGAGSSA) the composition is skewed to low complexity.

The protein belongs to the heat shock protein 70 family.

In terms of biological role, acts as a chaperone. This is Chaperone protein DnaK from Xylella fastidiosa (strain M12).